An 84-amino-acid chain; its full sequence is MDNNVDTITLTDEEGKETEFEVITKLDIEDKEYVVVVPKNEEVDEAIALRIDNNDDGEEVLVPVEEDEEFNMVAEAYELLFSEE.

This sequence belongs to the UPF0473 family.

The chain is UPF0473 protein CLD_2004 from Clostridium botulinum (strain Okra / Type B1).